We begin with the raw amino-acid sequence, 142 residues long: Small ribosomal subunit protein uS12 (142 aa).

The segment at 1 to 44 (MANGKYAARKLKQDRQKHRWSDSDYARRARGLGKKSDPLEGAPQ) is disordered. Over residues 11 to 27 (LKQDRQKHRWSDSDYAR) the composition is skewed to basic and acidic residues.

Belongs to the universal ribosomal protein uS12 family. Part of the 30S ribosomal subunit.

In terms of biological role, with S4 and S5 plays an important role in translational accuracy. Located at the interface of the 30S and 50S subunits. The chain is Small ribosomal subunit protein uS12 from Natronomonas pharaonis (strain ATCC 35678 / DSM 2160 / CIP 103997 / JCM 8858 / NBRC 14720 / NCIMB 2260 / Gabara) (Halobacterium pharaonis).